A 150-amino-acid polypeptide reads, in one-letter code: Urease accessory protein UreE (150 aa).

This sequence belongs to the UreE family.

It is found in the cytoplasm. Involved in urease metallocenter assembly. Binds nickel. Probably functions as a nickel donor during metallocenter assembly. This chain is Urease accessory protein UreE, found in Staphylococcus saprophyticus subsp. saprophyticus (strain ATCC 15305 / DSM 20229 / NCIMB 8711 / NCTC 7292 / S-41).